The primary structure comprises 641 residues: DNA primase (641 aa).

A CHC2-type zinc finger spans residues 41-65 (CPFHDEKSPSFQVSPSKGFFHCFGC). The Toprim domain occupies 262 to 346 (SRAVVVEGYT…AAETYIAIAP (85 aa)). Residues glutamate 268, aspartate 317, and aspartate 319 each contribute to the Mg(2+) site. Positions 444–478 (RDRGGKGPAPDQRQRGGGPQQQAGPMTATPRGPAL) are disordered.

The protein belongs to the DnaG primase family. In terms of assembly, monomer. Interacts with DnaB. It depends on Zn(2+) as a cofactor. Requires Mg(2+) as cofactor.

The enzyme catalyses ssDNA + n NTP = ssDNA/pppN(pN)n-1 hybrid + (n-1) diphosphate.. Its function is as follows. RNA polymerase that catalyzes the synthesis of short RNA molecules used as primers for DNA polymerase during DNA replication. This Streptomyces coelicolor (strain ATCC BAA-471 / A3(2) / M145) protein is DNA primase.